We begin with the raw amino-acid sequence, 317 residues long: L-lactate dehydrogenase 1 (317 aa).

NAD(+)-binding positions include Val-17, Asp-38, Lys-43, Tyr-69, and 83-84 (GA). Substrate is bound by residues Gln-86 and Arg-92. NAD(+)-binding positions include Ser-105, 122 to 124 (ATN), and Ser-147. Residue 124-127 (NPVD) participates in substrate binding. A substrate-binding site is contributed by 152 to 155 (DSAR). His-179 acts as the Proton acceptor in catalysis. Phosphotyrosine is present on Tyr-223. Thr-232 is a substrate binding site.

It belongs to the LDH/MDH superfamily. LDH family. As to quaternary structure, homotetramer.

The protein localises to the cytoplasm. The enzyme catalyses (S)-lactate + NAD(+) = pyruvate + NADH + H(+). Its pathway is fermentation; pyruvate fermentation to lactate; (S)-lactate from pyruvate: step 1/1. Functionally, catalyzes the conversion of lactate to pyruvate (Potential). Appears to be the primary factor that allows S.aureus growth during nitrosative stress in both aerobically and anaerobically cultured cells. This is L-lactate dehydrogenase 1 from Staphylococcus aureus (strain JH1).